Here is a 425-residue protein sequence, read N- to C-terminus: UBX domain-containing protein 4 (425 aa).

The tract at residues 224–257 (TPIPSLPSTPSSYQNLPSQSLTGESLPTVSNQEK) is disordered. Residues 236–254 (YQNLPSQSLTGESLPTVSN) show a composition bias toward polar residues. The residue at position 338 (Ser338) is a Phosphoserine. The 50-residue stretch at 341–390 (PLPSSAIVKFDFGNGKSIVHEFSKDDNIETLRAFVASHLSPEESTSFQLT) folds into the UBX domain.

The protein resides in the cytoplasm. Its subcellular location is the nucleus. Its function is as follows. Involved in CDC48-dependent protein degradation through the ubiquitin/proteasome pathway. This Schizosaccharomyces pombe (strain 972 / ATCC 24843) (Fission yeast) protein is UBX domain-containing protein 4 (ubx4).